The following is a 98-amino-acid chain: Putative defensin-like protein 233 (98 aa).

The signal sequence occupies residues 1–28; it reads MGMWCTTLFMVSCVSICLILSHVQEVEA. 4 cysteine pairs are disulfide-bonded: cysteine 35/cysteine 96, cysteine 45/cysteine 70, cysteine 53/cysteine 86, and cysteine 68/cysteine 88.

The protein belongs to the DEFL family. In terms of tissue distribution, expressed at least in stem, root, rosette leaves and flower buds.

The protein localises to the secreted. The protein is Putative defensin-like protein 233 (SCRL22) of Arabidopsis thaliana (Mouse-ear cress).